A 391-amino-acid polypeptide reads, in one-letter code: Elongation factor Tu 2 (391 aa).

The tr-type G domain occupies 10–201 (KPHVNIGTIG…EVDRYIPTPE (192 aa)). The segment at 19-26 (GHVDHGKT) is G1. 19–26 (GHVDHGKT) lines the GTP pocket. T26 is a Mg(2+) binding site. A G2 region spans residues 55–59 (GITIS). The interval 76-79 (DCPG) is G3. GTP is bound by residues 76–80 (DCPGH) and 131–134 (NKVD). A G4 region spans residues 131–134 (NKVD). Residues 169–171 (SAL) are G5.

It belongs to the TRAFAC class translation factor GTPase superfamily. Classic translation factor GTPase family. EF-Tu/EF-1A subfamily. In terms of assembly, monomer.

The protein localises to the cytoplasm. The enzyme catalyses GTP + H2O = GDP + phosphate + H(+). Its function is as follows. GTP hydrolase that promotes the GTP-dependent binding of aminoacyl-tRNA to the A-site of ribosomes during protein biosynthesis. The polypeptide is Elongation factor Tu 2 (Bartonella bacilliformis (strain ATCC 35685 / KC583 / Herrer 020/F12,63)).